The sequence spans 403 residues: Chalcone synthase 2 (403 aa).

Residue 59 to 66 (RFQRMCES) participates in CoA binding. The active-site Acyl-thioester intermediate is the cysteine 168. 220 to 221 (GD) serves as a coordination point for substrate. Alanine 313 is a CoA binding site.

The protein belongs to the thiolase-like superfamily. Chalcone/stilbene synthases family. In terms of assembly, homodimer.

It carries out the reaction (E)-4-coumaroyl-CoA + 3 malonyl-CoA + 3 H(+) = 2',4,4',6'-tetrahydroxychalcone + 3 CO2 + 4 CoA. Its pathway is secondary metabolite biosynthesis; flavonoid biosynthesis. In terms of biological role, the primary product of this enzyme is 4,2',4',6'-tetrahydroxychalcone (also termed naringenin-chalcone or chalcone) which can under specific conditions spontaneously isomerize into naringenin. The sequence is that of Chalcone synthase 2 (CHS2) from Oryza sativa subsp. japonica (Rice).